Here is a 2230-residue protein sequence, read N- to C-terminus: Probable serine/threonine-protein kinase DDB_G0267686 (2230 aa).

The segment covering 1-12 (MEPNNNISNSNN) has biased composition (low complexity). Disordered stretches follow at residues 1-22 (MEPN…GDGK), 121-152 (NNNS…QLNN), 270-352 (DEKE…DKIS), 368-397 (PIIN…RLSS), 430-451 (NGAS…ILST), 464-574 (KNSS…NSPS), 593-620 (GSGS…NSST), 699-849 (QHQQ…LLPS), and 915-974 (SNQI…SSNS). Positions 270–336 (DEKENKEGGQ…NENEKNHNDK (67 aa)) are enriched in basic and acidic residues. Over residues 337 to 346 (NDDDDDDEDN) the composition is skewed to acidic residues. Composition is skewed to low complexity over residues 375 to 388 (SSSN…NNSI), 430 to 447 (NGAS…GPTP), 473 to 574 (NNNN…NSPS), 593 to 602 (GSGSSSLGKG), 610 to 619 (SYSNNNNNSS), and 699 to 721 (QHQQ…QQQL). Polar residues predominate over residues 722 to 731 (KSRSNTTNTP). Residues 745–754 (NSPPVSPPSS) are compositionally biased toward pro residues. Low complexity-rich tracts occupy residues 755–766 (PMLSPLSSSPPS) and 783–818 (TGSL…RSNS). Over residues 840 to 849 (YNTTPPLLPS) the composition is skewed to polar residues. The 129-residue stretch at 991 to 1119 (SLSALMKDRI…CILHSTTNGT (129 aa)) folds into the RGS domain. Disordered stretches follow at residues 1146-1181 (SKET…INNN), 1220-1243 (KLSH…NQPL), 1300-1362 (LSPP…GDQT), 1506-1546 (QQQQ…QPQQ), 1563-1611 (PTIP…NNNS), 1725-1771 (VSNN…NNGN), 1802-1848 (NNLM…NNNH), and 1905-1929 (ENNT…TISQ). Composition is skewed to low complexity over residues 1149-1181 (TSNS…INNN) and 1222-1239 (SHSN…SYTS). The segment covering 1324 to 1353 (TNGSMKSSLFQQQLQPTGSINSSPINNHQV) has biased composition (polar residues). Low complexity-rich tracts occupy residues 1506-1520 (QQQQ…QFQP) and 1530-1546 (PSSN…QPQQ). Residues 1726–1769 (SNNNNINSNNNNNNNNNNNNNNNNNNNNNNNNNNNNNNNSNNNN) are compositionally biased toward low complexity. Residues 1905–1915 (ENNTTTTTTTT) are compositionally biased toward low complexity. Positions 1916 to 1929 (SNRPFRSNNPTISQ) are enriched in polar residues. The 260-residue stretch at 1949–2208 (IVFLNKLGEG…SCPEILDSLL (260 aa)) folds into the Protein kinase domain. Residues 1955–1963 (LGEGTSAKV) and Lys1976 contribute to the ATP site. Asp2069 functions as the Proton acceptor in the catalytic mechanism.

The protein belongs to the protein kinase superfamily. TKL Ser/Thr protein kinase family.

The enzyme catalyses L-seryl-[protein] + ATP = O-phospho-L-seryl-[protein] + ADP + H(+). It catalyses the reaction L-threonyl-[protein] + ATP = O-phospho-L-threonyl-[protein] + ADP + H(+). The protein is Probable serine/threonine-protein kinase DDB_G0267686 of Dictyostelium discoideum (Social amoeba).